The chain runs to 492 residues: Malonyl-CoA decarboxylase, mitochondrial (492 aa).

Positions 1 to 28 (MRGLGPGLRARRLLPLRSPPRPPGPRGR) are disordered. The transit peptide at 1–38 (MRGLGPGLRARRLLPLRSPPRPPGPRGRRLCGGLAASA) directs the protein to the mitochondrion. Residues 39-189 (MDELLRRAVP…VLKSMLSEWF (151 aa)) form an alpha-helical domain region. An N6-acetyllysine modification is found at Lys58. Position 167 is an N6-acetyllysine; alternate (Lys167). Lys167 is subject to N6-succinyllysine; alternate. The catalytic domain stretch occupies residues 190 to 492 (SSGFLNLERV…VAQFQNNSKL (303 aa)). The residue at position 210 (Lys210) is an N6-acetyllysine. The residue at position 221 (Lys221) is an N6-succinyllysine. Position 298-304 (298-304 (QGVELGT)) interacts with malonyl-CoA. Lys316 is modified (N6-acetyllysine). Ser328 serves as a coordination point for malonyl-CoA. Ser328 serves as the catalytic Proton acceptor. An N6-acetyllysine; alternate modification is found at Lys385. An N6-succinyllysine; alternate modification is found at Lys385. The residue at position 388 (Lys388) is an N6-acetyllysine. A malonyl-CoA-binding site is contributed by His422. His422 acts as the Proton donor in catalysis. Residues Lys441 and Lys471 each carry the N6-acetyllysine modification. The Microbody targeting signal signature appears at 490–492 (SKL).

In terms of assembly, homotetramer. Dimer of dimers. The two subunits within a dimer display conformational differences suggesting that at any given moment, only one of the two subunits is competent for malonyl-CoA binding and catalytic activity. Under oxidizing conditions, can form disulfide-linked homotetramers (in vitro). Associates with the peroxisomal targeting signal receptor PEX5. Post-translationally, interchain disulfide bonds may form in peroxisomes (Potential). Interchain disulfide bonds are not expected to form in the reducing environment of the cytoplasm and mitochondria. Acetylation at Lys-471 activates malonyl-CoA decarboxylase activity. Deacetylation at Lys-471 by SIRT4 represses activity, leading to promote lipogenesis.

Its subcellular location is the cytoplasm. The protein localises to the mitochondrion matrix. It is found in the peroxisome. It localises to the peroxisome matrix. It catalyses the reaction malonyl-CoA + H(+) = acetyl-CoA + CO2. Its pathway is metabolic intermediate biosynthesis; acetyl-CoA biosynthesis; acetyl-CoA from malonyl-CoA: step 1/1. Its activity is regulated as follows. Malonyl-CoA decarboxylase activity does not require any cofactors or divalent metal ions. Functionally, catalyzes the conversion of malonyl-CoA to acetyl-CoA. In the fatty acid biosynthesis MCD selectively removes malonyl-CoA and thus assures that methyl-malonyl-CoA is the only chain elongating substrate for fatty acid synthase and that fatty acids with multiple methyl side chains are produced. In peroxisomes it may be involved in degrading intraperoxisomal malonyl-CoA, which is generated by the peroxisomal beta-oxidation of odd chain-length dicarboxylic fatty acids. Plays a role in the metabolic balance between glucose and lipid oxidation in muscle independent of alterations in insulin signaling. Plays a role in controlling the extent of ischemic injury by promoting glucose oxidation. This is Malonyl-CoA decarboxylase, mitochondrial from Mus musculus (Mouse).